A 250-amino-acid polypeptide reads, in one-letter code: Type III pantothenate kinase (250 aa).

6 to 13 (DVGNTNTV) is a binding site for ATP. Residue 103–106 (GADR) participates in substrate binding. The Proton acceptor role is filled by D105. D125 lines the K(+) pocket. T128 is an ATP binding site. Position 180 (T180) interacts with substrate.

Belongs to the type III pantothenate kinase family. Homodimer. NH4(+) is required as a cofactor. K(+) serves as cofactor.

The protein localises to the cytoplasm. It catalyses the reaction (R)-pantothenate + ATP = (R)-4'-phosphopantothenate + ADP + H(+). Its pathway is cofactor biosynthesis; coenzyme A biosynthesis; CoA from (R)-pantothenate: step 1/5. Catalyzes the phosphorylation of pantothenate (Pan), the first step in CoA biosynthesis. The sequence is that of Type III pantothenate kinase from Frankia casuarinae (strain DSM 45818 / CECT 9043 / HFP020203 / CcI3).